The primary structure comprises 249 residues: Ubiquinone biosynthesis O-methyltransferase (249 aa).

Residues 1 to 21 form a disordered region; the sequence is MIPEVSNEASQPAAHRQENVD. 4 residues coordinate S-adenosyl-L-methionine: arginine 52, glycine 72, aspartate 93, and methionine 137.

This sequence belongs to the methyltransferase superfamily. UbiG/COQ3 family.

It carries out the reaction a 3-demethylubiquinol + S-adenosyl-L-methionine = a ubiquinol + S-adenosyl-L-homocysteine + H(+). It catalyses the reaction a 3-(all-trans-polyprenyl)benzene-1,2-diol + S-adenosyl-L-methionine = a 2-methoxy-6-(all-trans-polyprenyl)phenol + S-adenosyl-L-homocysteine + H(+). It participates in cofactor biosynthesis; ubiquinone biosynthesis. Its function is as follows. O-methyltransferase that catalyzes the 2 O-methylation steps in the ubiquinone biosynthetic pathway. The chain is Ubiquinone biosynthesis O-methyltransferase from Sodalis glossinidius (strain morsitans).